A 198-amino-acid chain; its full sequence is Nucleoside triphosphate pyrophosphatase (198 aa).

The Proton acceptor role is filled by D72.

It belongs to the Maf family. A divalent metal cation serves as cofactor.

Its subcellular location is the cytoplasm. The enzyme catalyses a ribonucleoside 5'-triphosphate + H2O = a ribonucleoside 5'-phosphate + diphosphate + H(+). It catalyses the reaction a 2'-deoxyribonucleoside 5'-triphosphate + H2O = a 2'-deoxyribonucleoside 5'-phosphate + diphosphate + H(+). Functionally, nucleoside triphosphate pyrophosphatase. May have a dual role in cell division arrest and in preventing the incorporation of modified nucleotides into cellular nucleic acids. In Corynebacterium aurimucosum (strain ATCC 700975 / DSM 44827 / CIP 107346 / CN-1) (Corynebacterium nigricans), this protein is Nucleoside triphosphate pyrophosphatase.